Reading from the N-terminus, the 405-residue chain is Phosphoglycerate kinase (405 aa).

Substrate is bound by residues 21 to 23, arginine 36, 59 to 62, arginine 119, and arginine 161; these read DFN and HLGR. ATP contacts are provided by residues lysine 212, glycine 301, glutamate 332, and 361-364; that span reads GGDS.

It belongs to the phosphoglycerate kinase family. As to quaternary structure, monomer.

The protein localises to the cytoplasm. It carries out the reaction (2R)-3-phosphoglycerate + ATP = (2R)-3-phospho-glyceroyl phosphate + ADP. It functions in the pathway carbohydrate degradation; glycolysis; pyruvate from D-glyceraldehyde 3-phosphate: step 2/5. The polypeptide is Phosphoglycerate kinase (Leuconostoc mesenteroides subsp. mesenteroides (strain ATCC 8293 / DSM 20343 / BCRC 11652 / CCM 1803 / JCM 6124 / NCDO 523 / NBRC 100496 / NCIMB 8023 / NCTC 12954 / NRRL B-1118 / 37Y)).